Reading from the N-terminus, the 527-residue chain is Probable malate:quinone oxidoreductase (527 aa).

The protein belongs to the MQO family. FAD serves as cofactor.

It carries out the reaction (S)-malate + a quinone = a quinol + oxaloacetate. The protein operates within carbohydrate metabolism; tricarboxylic acid cycle; oxaloacetate from (S)-malate (quinone route): step 1/1. This Pectobacterium carotovorum subsp. carotovorum (strain PC1) protein is Probable malate:quinone oxidoreductase.